Reading from the N-terminus, the 514-residue chain is Peptide chain release factor 3 (514 aa).

One can recognise a tr-type G domain in the interval Lys-8–His-268. Residues Ser-17–Thr-24, Asp-85–His-89, and Asn-139–Asp-142 contribute to the GTP site.

The protein belongs to the TRAFAC class translation factor GTPase superfamily. Classic translation factor GTPase family. PrfC subfamily.

Its subcellular location is the cytoplasm. In terms of biological role, increases the formation of ribosomal termination complexes and stimulates activities of RF-1 and RF-2. It binds guanine nucleotides and has strong preference for UGA stop codons. It may interact directly with the ribosome. The stimulation of RF-1 and RF-2 is significantly reduced by GTP and GDP, but not by GMP. The chain is Peptide chain release factor 3 from Streptococcus pyogenes serotype M5 (strain Manfredo).